Consider the following 107-residue polypeptide: Small ribosomal subunit protein eS25 (107 aa).

The interval 1–35 (MPPKQQLSKAAKAAAAMAGGKKSKKKWSKKSHKDK) is disordered. Over residues 8–20 (SKAAKAAAAMAGG) the composition is skewed to low complexity. Basic residues predominate over residues 21–35 (KKSKKKWSKKSHKDK).

It belongs to the eukaryotic ribosomal protein eS25 family.

The protein is Small ribosomal subunit protein eS25 (RPS25) of Candida glabrata (strain ATCC 2001 / BCRC 20586 / JCM 3761 / NBRC 0622 / NRRL Y-65 / CBS 138) (Yeast).